The chain runs to 351 residues: Probable cell division control protein 7 homolog 2 (351 aa).

The Protein kinase domain occupies Tyr21–Phe341. ATP-binding positions include Ile27–Val35 and Lys50. Asp137 (proton acceptor) is an active-site residue.

Belongs to the protein kinase superfamily. Ser/Thr protein kinase family. CDC7 subfamily. The cofactor is Mg(2+).

The enzyme catalyses L-seryl-[protein] + ATP = O-phospho-L-seryl-[protein] + ADP + H(+). It catalyses the reaction L-threonyl-[protein] + ATP = O-phospho-L-threonyl-[protein] + ADP + H(+). Serine/threonine-protein kinase. Needed for the initiation of DNA synthesis during mitosis as well as for synaptonemal complex formation and commitment to recombination during meiosis. This Encephalitozoon cuniculi (strain GB-M1) (Microsporidian parasite) protein is Probable cell division control protein 7 homolog 2 (CDC7-2).